The sequence spans 295 residues: Indole-3-glycerol phosphate synthase (295 aa).

It belongs to the TrpC family.

It catalyses the reaction 1-(2-carboxyphenylamino)-1-deoxy-D-ribulose 5-phosphate + H(+) = (1S,2R)-1-C-(indol-3-yl)glycerol 3-phosphate + CO2 + H2O. The protein operates within amino-acid biosynthesis; L-tryptophan biosynthesis; L-tryptophan from chorismate: step 4/5. This is Indole-3-glycerol phosphate synthase from Synechococcus sp. (strain ATCC 27144 / PCC 6301 / SAUG 1402/1) (Anacystis nidulans).